The primary structure comprises 2492 residues: Talin-A (2492 aa).

The FERM domain occupies 84–365; sequence RPQKFKLLDG…GYIEIIMKAR (282 aa). Positions 2250 to 2492 constitute an I/LWEQ domain; the sequence is EEDNVLEDLE…NSRKQNYNKN (243 aa).

It is found in the cytoplasm. The protein localises to the cytoskeleton. The protein resides in the cell cortex. Functionally, actin-binding protein that may be involved in the control of cell motility and chemotaxis. This is Talin-A (talA) from Dictyostelium discoideum (Social amoeba).